We begin with the raw amino-acid sequence, 246 residues long: Exosome complex component SKI6 (246 aa).

The protein belongs to the RNase PH family. In terms of assembly, component of the RNA exosome complex. Specifically part of the catalytically inactive RNA exosome core complex (Exo-9) which may associate with the catalytic subunits RRP6 and DIS3 in cytoplasmic- and nuclear-specific RNA exosome complex forms. Exo-9 is formed by a hexameric base ring of RNase PH domain-containing subunits and a cap ring consisting of CSL4, RRP4 and RRP40.

Its subcellular location is the cytoplasm. It localises to the nucleus. The protein resides in the nucleolus. Non-catalytic component of the RNA exosome complex which has 3'-&gt;5' exoribonuclease activity and participates in a multitude of cellular RNA processing and degradation events. In the nucleus, the RNA exosome complex is involved in proper maturation of stable RNA species such as rRNA, snRNA and snoRNA, in the elimination of RNA processing by-products and non-coding 'pervasive' transcripts, such as antisense RNA species and cryptic unstable transcripts (CUTs), and of mRNAs with processing defects, thereby limiting or excluding their export to the cytoplasm. In the cytoplasm, the RNA exosome complex is involved in general mRNA turnover and in RNA surveillance pathways, preventing translation of aberrant mRNAs. The catalytic inactive RNA exosome core complex of 9 subunits (Exo-9) is proposed to play a pivotal role in the binding and presentation of RNA for ribonucleolysis, and to serve as a scaffold for the association with catalytic subunits and accessory proteins or complexes. SKI6 is part of the hexameric ring of RNase PH domain-containing subunits proposed to form a central channel which threads RNA substrates for degradation. This is Exosome complex component SKI6 (SKI6) from Saccharomyces cerevisiae (strain ATCC 204508 / S288c) (Baker's yeast).